The primary structure comprises 937 residues: AP-2 complex subunit beta (937 aa).

Position 2 is an N-acetylthreonine (Thr-2). Ser-4 bears the Phosphoserine mark. Lys-265 bears the N6-acetyllysine mark. A phosphotyrosine mark is found at Tyr-737 and Tyr-928.

Belongs to the adaptor complexes large subunit family. In terms of assembly, adapter protein complex 2 (AP-2) is a heterotetramer composed of two large adaptins (alpha-type subunit AP2A1 or AP2A2 and beta-type subunit AP2B1), a medium adaptin (mu-type subunit AP2M1) and a small adaptin (sigma-type subunit AP2S1). Interacts with EPN1. Interacts with EPS15; clathrin competes with EPS15. Interacts with SNAP91; clathrin competes with SNAP91. Interacts with CLTC; clathrin competes with EPS15, SNAP91 and PIP5K1C. Interacts with LDLRAP1. Interacts with AMPH and BIN1. Interacts with ARF6 (GDP-bound). Interacts (dephosphorylated at Tyr-737) with ARRB1; phosphorylation of AP2B1 at Tyr-737 disrupts the interaction. Interacts with SLC2A8. Interacts with SCYL1 and SCYL2. Interacts with TGFBR1 and TGFBR2. Interacts with PIP5K1C; clathrin competes with PIP5K1C. Interacts with DENND1B. Interacts with FCHO1. Interacts with RFTN1. Interacts with KIAA1107. Together with AP2A1 or AP2A2 and AP2M1, it interacts with ADAM10; this interaction facilitates ADAM10 endocytosis from the plasma membrane during long-term potentiation in hippocampal neurons. In terms of processing, the N-terminus is blocked. Phosphorylation at Tyr-737 by SRC occurs at the plasma membrane in clathrin-coated vesicles (CCVs).

It is found in the cell membrane. Its subcellular location is the membrane. The protein resides in the coated pit. Component of the adaptor protein complex 2 (AP-2). Adaptor protein complexes function in protein transport via transport vesicles in different membrane traffic pathways. Adaptor protein complexes are vesicle coat components and appear to be involved in cargo selection and vesicle formation. AP-2 is involved in clathrin-dependent endocytosis in which cargo proteins are incorporated into vesicles surrounded by clathrin (clathrin-coated vesicles, CCVs) which are destined for fusion with the early endosome. The clathrin lattice serves as a mechanical scaffold but is itself unable to bind directly to membrane components. Clathrin-associated adaptor protein (AP) complexes which can bind directly to both the clathrin lattice and to the lipid and protein components of membranes are considered to be the major clathrin adaptors contributing the CCV formation. AP-2 also serves as a cargo receptor to selectively sort the membrane proteins involved in receptor-mediated endocytosis. AP-2 seems to play a role in the recycling of synaptic vesicle membranes from the presynaptic surface. AP-2 recognizes Y-X-X-[FILMV] (Y-X-X-Phi) and [ED]-X-X-X-L-[LI] endocytosis signal motifs within the cytosolic tails of transmembrane cargo molecules. AP-2 may also play a role in maintaining normal post-endocytic trafficking through the ARF6-regulated, non-clathrin pathway. During long-term potentiation in hippocampal neurons, AP-2 is responsible for the endocytosis of ADAM10. The AP-2 beta subunit acts via its C-terminal appendage domain as a scaffolding platform for endocytic accessory proteins; at least some clathrin-associated sorting proteins (CLASPs) are recognized by their [DE]-X(1,2)-F-X-X-[FL]-X-X-X-R motif. The AP-2 beta subunit binds to clathrin heavy chain, promoting clathrin lattice assembly; clathrin displaces at least some CLASPs from AP2B1 which probably then can be positioned for further coat assembly. The polypeptide is AP-2 complex subunit beta (AP2B1) (Bos taurus (Bovine)).